The sequence spans 133 residues: Agglutinin alpha chain (133 aa).

The region spanning 1–133 (GVTFDDGAYT…LDYFSIYLSL (133 aa)) is the Jacalin-type lectin domain.

The protein belongs to the jacalin lectin family. In terms of assembly, formed of four alpha chains and four beta chains.

Functionally, D-galactose-specific lectin, binds the T-antigen structure Gal-beta1,3-GalNAc. This Maclura pomifera (Osage orange) protein is Agglutinin alpha chain.